The chain runs to 257 residues: Ribonuclease PH (257 aa).

Residues R86 and 124 to 126 (GTR) contribute to the phosphate site.

The protein belongs to the RNase PH family. Homohexameric ring arranged as a trimer of dimers.

The enzyme catalyses tRNA(n+1) + phosphate = tRNA(n) + a ribonucleoside 5'-diphosphate. Functionally, phosphorolytic 3'-5' exoribonuclease that plays an important role in tRNA 3'-end maturation. Removes nucleotide residues following the 3'-CCA terminus of tRNAs; can also add nucleotides to the ends of RNA molecules by using nucleoside diphosphates as substrates, but this may not be physiologically important. Probably plays a role in initiation of 16S rRNA degradation (leading to ribosome degradation) during starvation. The chain is Ribonuclease PH from Sulfurihydrogenibium sp. (strain YO3AOP1).